The primary structure comprises 928 residues: Outer membrane protein SlpA (928 aa).

Residues 1–23 (MKKRLVTLLAGLLTVLSMGFGLA) form the signal peptide. An SLH domain is found at 24 to 84 (QFSDVPAGHW…QQIEEELKTQ (61 aa)).

In terms of assembly, homotrimer.

Its subcellular location is the cell outer membrane. Functionally, plays an important role in the structural organization and integrity of the cell envelope, bridging the outer membrane to the peptidoglyan layer. Appears to be a nonselective channel. This is Outer membrane protein SlpA (slpA) from Thermus thermophilus (strain ATCC 27634 / DSM 579 / HB8).